The chain runs to 467 residues: Asparagine--tRNA ligase (467 aa).

The protein belongs to the class-II aminoacyl-tRNA synthetase family. As to quaternary structure, homodimer.

It localises to the cytoplasm. It catalyses the reaction tRNA(Asn) + L-asparagine + ATP = L-asparaginyl-tRNA(Asn) + AMP + diphosphate + H(+). The protein is Asparagine--tRNA ligase of Legionella pneumophila (strain Paris).